The primary structure comprises 180 residues: NADH-quinone oxidoreductase subunit I (180 aa).

4Fe-4S ferredoxin-type domains lie at 48–80 (IVLTRDPDGDERCVACNLCAVACPVGCISLQKS) and 90–119 (EFFRINFSRCIFCGLCEEACPTTAIQLTPD). Positions 60, 63, 66, 70, 99, 102, 105, and 109 each coordinate [4Fe-4S] cluster. Over residues 161–174 (KPKGDAENEAKPID) the composition is skewed to basic and acidic residues. The segment at 161–180 (KPKGDAENEAKPIDVKSLLP) is disordered.

The protein belongs to the complex I 23 kDa subunit family. In terms of assembly, NDH-1 is composed of 14 different subunits. Subunits NuoA, H, J, K, L, M, N constitute the membrane sector of the complex. [4Fe-4S] cluster serves as cofactor.

It localises to the cell inner membrane. The enzyme catalyses a quinone + NADH + 5 H(+)(in) = a quinol + NAD(+) + 4 H(+)(out). In terms of biological role, NDH-1 shuttles electrons from NADH, via FMN and iron-sulfur (Fe-S) centers, to quinones in the respiratory chain. The immediate electron acceptor for the enzyme in this species is believed to be ubiquinone. Couples the redox reaction to proton translocation (for every two electrons transferred, four hydrogen ions are translocated across the cytoplasmic membrane), and thus conserves the redox energy in a proton gradient. This Aeromonas hydrophila subsp. hydrophila (strain ATCC 7966 / DSM 30187 / BCRC 13018 / CCUG 14551 / JCM 1027 / KCTC 2358 / NCIMB 9240 / NCTC 8049) protein is NADH-quinone oxidoreductase subunit I.